Consider the following 698-residue polypeptide: MSKKLENIRNIGICAHIDAGKTTTTERILYYTGKSHKIGEVHEGGATMDWMEQEQERGITITSAATTCRWQDKQINIIDTPGHVDFTIEVERSLRVLDGAVAVFDGVAGVEPQSETVWRQADKYNVPRMCFVNKMDRMGADFYRCVDMIKDRLGAKPLVIQLPIGIEENFKGVVDLVKMQAVVWKDESLGAEYSYQEIPDDMKAKAEEYRANLLDMVVELDDKIMEKYLSGEEVTEEEIKKLIRKGTISAAFYPVLCGSAFKNKGVQPLLDAVVDYLPSPIDIATVKGVEVSTGEEKDFPISVSEPFSALAFKIMNDPFVGSLTFIRVYSGKITSGTTVINTVKNKREKIGRMLLMHANNREDVKEASAGDIVALAGLKDTTTTGDTLSDEDKKVILERMEFPEPVIELAVEPKSKVDQEKMGLALSRLAAEDPSFRTSTDQETGQTVIKGMGELHLEIIIDRMRREFKVEANIGAPQVAYRETITKACEIDYTHKKQSGGAGQFARVKIIFEPLKDVKDLKEEDKNKSFIFESKIVGGAVPKEYIPGVEKGLNNIRETGVIAGYPMIDFKATLIDGAFHDVDSSVLAFEIAAKAAFREGMPKGNPKLLEPIMKVEVITPDEYMGDVIGDLNSRRGQVQGMEPRGNAQVIKAYVPLAEMFGYVNTLRSLSQGRAQYSMVFNHYDQVPTQVADTIKAKK.

The tr-type G domain maps to 6–281 (ENIRNIGICA…AVVDYLPSPI (276 aa)). GTP is bound by residues 15–22 (AHIDAGKT), 79–83 (DTPGH), and 133–136 (NKMD).

The protein belongs to the TRAFAC class translation factor GTPase superfamily. Classic translation factor GTPase family. EF-G/EF-2 subfamily.

It is found in the cytoplasm. Its function is as follows. Catalyzes the GTP-dependent ribosomal translocation step during translation elongation. During this step, the ribosome changes from the pre-translocational (PRE) to the post-translocational (POST) state as the newly formed A-site-bound peptidyl-tRNA and P-site-bound deacylated tRNA move to the P and E sites, respectively. Catalyzes the coordinated movement of the two tRNA molecules, the mRNA and conformational changes in the ribosome. The polypeptide is Elongation factor G (Rickettsia bellii (strain RML369-C)).